Consider the following 183-residue polypeptide: Adenine phosphoribosyltransferase (183 aa).

This sequence belongs to the purine/pyrimidine phosphoribosyltransferase family. In terms of assembly, homodimer.

Its subcellular location is the cytoplasm. The catalysed reaction is AMP + diphosphate = 5-phospho-alpha-D-ribose 1-diphosphate + adenine. Its pathway is purine metabolism; AMP biosynthesis via salvage pathway; AMP from adenine: step 1/1. Its function is as follows. Catalyzes a salvage reaction resulting in the formation of AMP, that is energically less costly than de novo synthesis. This is Adenine phosphoribosyltransferase from Salmonella typhi.